Consider the following 136-residue polypeptide: ATP synthase epsilon chain (136 aa).

It belongs to the ATPase epsilon chain family. In terms of assembly, F-type ATPases have 2 components, CF(1) - the catalytic core - and CF(0) - the membrane proton channel. CF(1) has five subunits: alpha(3), beta(3), gamma(1), delta(1), epsilon(1). CF(0) has three main subunits: a, b and c.

It localises to the cell inner membrane. Functionally, produces ATP from ADP in the presence of a proton gradient across the membrane. The sequence is that of ATP synthase epsilon chain from Hydrogenobaculum sp. (strain Y04AAS1).